The primary structure comprises 116 residues: Putative UPF0320 protein YJR162C (116 aa).

Belongs to the UPF0320 family.

The polypeptide is Putative UPF0320 protein YJR162C (Saccharomyces cerevisiae (strain ATCC 204508 / S288c) (Baker's yeast)).